A 144-amino-acid chain; its full sequence is Large ribosomal subunit protein uL15 (144 aa).

The interval 1–58 (MRLNTLSPAAGSKPSKKRVGRGIGSGLGKTGGRGHKGQKSRSGGSVRPGFEGGQMPLK) is disordered. Positions 21 to 31 (RGIGSGLGKTG) are enriched in gly residues.

This sequence belongs to the universal ribosomal protein uL15 family. Part of the 50S ribosomal subunit.

In terms of biological role, binds to the 23S rRNA. This is Large ribosomal subunit protein uL15 from Vibrio atlanticus (strain LGP32) (Vibrio splendidus (strain Mel32)).